A 376-amino-acid polypeptide reads, in one-letter code: Ribosomal RNA large subunit methyltransferase G (376 aa).

It belongs to the methyltransferase superfamily. RlmG family.

It localises to the cytoplasm. It catalyses the reaction guanosine(1835) in 23S rRNA + S-adenosyl-L-methionine = N(2)-methylguanosine(1835) in 23S rRNA + S-adenosyl-L-homocysteine + H(+). Its function is as follows. Specifically methylates the guanine in position 1835 (m2G1835) of 23S rRNA. The chain is Ribosomal RNA large subunit methyltransferase G from Klebsiella pneumoniae (strain 342).